We begin with the raw amino-acid sequence, 131 residues long: Small ribosomal subunit protein uS8 (131 aa).

The protein belongs to the universal ribosomal protein uS8 family. As to quaternary structure, part of the 30S ribosomal subunit. Contacts proteins S5 and S12.

Functionally, one of the primary rRNA binding proteins, it binds directly to 16S rRNA central domain where it helps coordinate assembly of the platform of the 30S subunit. This Burkholderia lata (strain ATCC 17760 / DSM 23089 / LMG 22485 / NCIMB 9086 / R18194 / 383) protein is Small ribosomal subunit protein uS8.